The sequence spans 447 residues: BAG family molecular chaperone regulator 5 (447 aa).

BAG domains lie at 9–86 (SISR…EQNA), 95–167 (QNIF…EDCM), 182–260 (SVAK…DLEE), 275–350 (SILK…DLKE), and 365–442 (SHKA…DLKS).

In terms of assembly, binds to the ATPase domain of HSP/HSP70 chaperones. Binds PRKN. Interacts with HSPA8 and JPH2. As to expression, expressed in the heart.

Co-chaperone for HSP/HSP70 proteins. It functions as a nucleotide-exchange factor promoting the release of ADP from HSP70, thereby activating HSP70-mediated protein refolding. Has an essential role in maintaining proteostasis at junctional membrane complexes (JMC), where it may function as a scaffold between the HSPA8 chaperone and JMC proteins enabling correct, HSPA8-dependent JMC protein folding. Inhibits both auto-ubiquitination of PRKN and ubiquitination of target proteins by PRKN. In Homo sapiens (Human), this protein is BAG family molecular chaperone regulator 5 (BAG5).